The following is a 576-amino-acid chain: Laccase-1 (576 aa).

A signal peptide spans methionine 1 to alanine 19. 2 Plastocyanin-like domains span residues threonine 21–tyrosine 145 and valine 157–glutamate 304. An N-linked (GlcNAc...) asparagine glycan is attached at asparagine 41. The Cu cation site is built by histidine 82, histidine 84, histidine 127, and histidine 129. Residues cysteine 103 and cysteine 562 are joined by a disulfide bond. Residues asparagine 182, asparagine 228, asparagine 294, and asparagine 368 are each glycosylated (N-linked (GlcNAc...) asparagine). The region spanning aspartate 376–leucine 576 is the Plastocyanin-like 3 domain. Cu cation is bound by residues histidine 471, histidine 474, histidine 476, histidine 523, cysteine 524, histidine 525, and histidine 529.

Belongs to the multicopper oxidase family. As to quaternary structure, homodimer. The cofactor is Cu cation. As to expression, in mycelia, at a lower level than LCC4.

The protein resides in the secreted. The enzyme catalyses 4 hydroquinone + O2 = 4 benzosemiquinone + 2 H2O. Lignin degradation and detoxification of lignin-derived products. The chain is Laccase-1 (LCC1) from Thanatephorus cucumeris (Black scurf of potato).